The following is a 362-amino-acid chain: Glycyl-glycine endopeptidase ALE-1 (362 aa).

The signal sequence occupies residues methionine 1 to alanine 35. The disordered stretch occupies residues alanine 35–glutamate 110. The segment covering aspartate 40–glutamate 110 has biased composition (basic and acidic residues). Zn(2+)-binding residues include histidine 150 and aspartate 154. The active site involves histidine 231. Position 233 (histidine 233) interacts with Zn(2+). In terms of domain architecture, SH3b spans serine 282–serine 350.

The protein belongs to the peptidase M23B family. Zn(2+) serves as cofactor.

It localises to the secreted. The catalysed reaction is Hydrolysis of the -Gly-|-Gly- bond in the pentaglycine inter-peptide link joining staphylococcal cell wall peptidoglycans.. Functionally, lyses staphylococcal cells by hydrolyzing the polyglycine interpeptide bridges of the peptidoglycan. The polypeptide is Glycyl-glycine endopeptidase ALE-1 (Staphylococcus capitis).